A 309-amino-acid chain; its full sequence is MANQNSDLYKQITAGSVAAVFQTTMTYPFEYLKTGLQLQPKGTAFEIILPQIKSYFVGCSALNVAAFGKTILRFVTFDKLCHSLNNNIDNNDNFQRLTGYNLLIAGTLTGIVESLFIIPFENIKTTLIQSAMIDHKKLEKNQPVVNAKATFHKVATKSTPVARIEKLLPAVKHMYQTRGPAAFVQGTTATIFRQIANTSIQFTAYTAFKRLLQARNDKASSVITGLATSFTLVAMTQPIDVVKTRMMSQNAKTEYKNTLNCMYRIFVQEGMATFWKGSIFRFMKVGISGGLTFTVYEQVSLLLGFSSRS.

Solcar repeat units lie at residues 6-83 (SDLY…LCHS), 97-211 (LTGY…FKRL), and 216-302 (NDKA…VSLL). The next 6 helical transmembrane spans lie at 12–32 (ITAG…FEYL), 47–67 (IILP…VAAF), 100–120 (YNLL…IIPF), 184–204 (VQGT…QFTA), 222–242 (VITG…IDVV), and 285–305 (VGIS…LLGF).

The protein belongs to the mitochondrial carrier (TC 2.A.29) family.

It is found in the mitochondrion inner membrane. This is an uncharacterized protein from Saccharomyces cerevisiae (strain ATCC 204508 / S288c) (Baker's yeast).